The chain runs to 533 residues: Heterogeneous nuclear ribonucleoprotein Q (533 aa).

Ala-2 carries the N-acetylalanine modification. Ser-69 carries the phosphoserine modification. RRM domains lie at 72–151 (TEIF…ISVA), 153–235 (NRLF…WADP), and 248–318 (KVLF…FAKP). Residue Lys-78 forms a Glycyl lysine isopeptide (Lys-Gly) (interchain with G-Cter in SUMO2) linkage. Residue Lys-131 is modified to N6-acetyllysine. An N6-acetyllysine modification is found at Lys-273. Residue Tyr-283 is modified to Phosphotyrosine. The interaction with APOBEC1 stretch occupies residues 310–471 (NIEIVFAKPP…GARGGRGGNV (162 aa)). Position 354 is an asymmetric dimethylarginine; by PRMT1; alternate (Arg-354). Arg-354 carries the omega-N-methylarginine; by PRMT1; alternate modification. Repeat copies occupy residues 358–360 (RGG), 361–363 (RGG), 370–374 (YYGYE), 379–382 (YYGY), 388–390 (RGG), and 395–398 (YYGY). The 8 X 3 AA repeats of R-G-G stretch occupies residues 358 to 469 (RGGRGGYGYP…VRGARGGRGG (112 aa)). Positions 370-398 (YYGYEDYYDYYGYDYHNYRGGYEDPYYGY) are 3 X 4 AA repeats of Y-Y-G-Y. Residue Arg-406 is modified to Omega-N-methylarginine; by PRMT1. Residues 407-533 (GRGGRGARGA…YQDTFGQQWK (127 aa)) form a disordered region. One copy of the 1-4 repeat lies at 408–410 (RGG). Over residues 414–432 (RGAAPSRGRGAAPPRGRAG) the composition is skewed to low complexity. An Asymmetric dimethylarginine; by PRMT1 modification is found at Arg-420. At Arg-428 the chain carries Asymmetric dimethylarginine; by PRMT1; alternate. An Omega-N-methylarginine; by PRMT1; alternate modification is found at Arg-428. The segment at 428 to 459 (RGRAGYSQRGGPGSARGVRGARGGAQQQRGRG) is interaction with SMN. At Arg-436 the chain carries Asymmetric dimethylarginine; alternate. Arg-436 is subject to Omega-N-methylarginine; alternate. Residues 436-438 (RGG) form a 1-5 repeat. An asymmetric dimethylarginine; by PRMT1; alternate mark is found at Arg-446 and Arg-449. Residues Arg-446 and Arg-449 each carry the omega-N-methylarginine; by PRMT1; alternate modification. 3 consecutive repeat copies span residues 449–451 (RGG), 464–466 (RGG), and 467–469 (RGG). Positions 460–472 (VRGARGGRGGNVG) are enriched in gly residues. Positions 474 to 488 (KRKADGYNQPDSKRR) match the Bipartite nuclear localization signal motif. Positions 490 to 505 (TNNQNWGSQPIAQQPL) are enriched in polar residues. A Phosphoserine modification is found at Ser-497. Lys-517 is covalently cross-linked (Glycyl lysine isopeptide (Lys-Gly) (interchain with G-Cter in SUMO2)).

Identified in a histone pre-mRNA complex, at least composed of ERI1, LSM11, SLBP, SNRPB, SYNCRIP and YBX1. Identified in the spliceosome C complex. Component of the coding region determinant (CRD)-mediated complex, composed of DHX9, HNRNPU, IGF2BP1, SYNCRIP and YBX1. Identified in a mRNP complex, at least composed of DHX9, DDX3X, ELAVL1, HNRNPU, IGF2BP1, ILF3, PABPC1, PCBP2, PTBP2, STAU1, STAU2, SYNCRIP and YBX1. Identified in a mRNP granule complex, at least composed of ACTB, ACTN4, DHX9, ERG, HNRNPA1, HNRNPA2B1, HNRNPAB, HNRNPD, HNRNPL, HNRNPR, HNRNPU, HSPA1, HSPA8, IGF2BP1, ILF2, ILF3, NCBP1, NCL, PABPC1, PABPC4, PABPN1, RPLP0, RPS3, RPS3A, RPS4X, RPS8, RPS9, SYNCRIP, YBX1 and untranslated mRNAs. Component of the APOB mRNA editosome. Interacts with APOBEC1 and A1CF. Part of a complex associated with the FOS mCRD domain and consisting of PABPC1, PAIP1, CSDE1/UNR, HNRPD and SYNCRIP. Interacts with HNRPR, SMN, POLR2A hyperphosphorylated C-terminal domain, minute virus of mice (MVM) NS1 protein and through its C-terminal domain with SYT7, SYT8 and SYT9. The non-phosphorylated and phosphorylated forms are colocalized with PAIP1 in polysomes. Interacts with GTPBP1. Interacts with HABP4. Phosphorylated on tyrosine. The membrane-bound form found in microsomes is phosphorylated in vitro by insulin receptor tyrosine kinase (INSR). Phosphorylation is inhibited upon binding to RNA, whereas the cytoplasmic form is poorly phosphorylated.

It localises to the nucleus. It is found in the nucleoplasm. The protein localises to the cytoplasm. The protein resides in the microsome. In terms of biological role, heterogenous nuclear ribonucleoprotein (hnRNP) implicated in mRNA processing mechanisms. Component of the CRD-mediated complex that promotes MYC mRNA stability. Is associated in vitro with pre-mRNA, splicing intermediates and mature mRNA protein complexes. Binds to apoB mRNA AU-rich sequences. Part of the APOB mRNA editosome complex and may modulate the postranscriptional C to U RNA-editing of the APOB mRNA through either by binding to A1CF (APOBEC1 complementation factor), to APOBEC1 or to RNA itself. May be involved in translationally coupled mRNA turnover. Implicated with other RNA-binding proteins in the cytoplasmic deadenylation/translational and decay interplay of the FOS mRNA mediated by the major coding-region determinant of instability (mCRD) domain. Interacts in vitro preferentially with poly(A) and poly(U) RNA sequences. May be involved in cytoplasmic vesicle-based mRNA transport through interaction with synaptotagmins. The protein is Heterogeneous nuclear ribonucleoprotein Q (Syncrip) of Rattus norvegicus (Rat).